The chain runs to 211 residues: Urease accessory protein UreG (211 aa).

Residue 11 to 18 (GPVGSGKT) coordinates GTP.

It belongs to the SIMIBI class G3E GTPase family. UreG subfamily. As to quaternary structure, homodimer. UreD, UreF and UreG form a complex that acts as a GTP-hydrolysis-dependent molecular chaperone, activating the urease apoprotein by helping to assemble the nickel containing metallocenter of UreC. The UreE protein probably delivers the nickel.

It localises to the cytoplasm. Its function is as follows. Facilitates the functional incorporation of the urease nickel metallocenter. This process requires GTP hydrolysis, probably effectuated by UreG. The chain is Urease accessory protein UreG from Photorhabdus laumondii subsp. laumondii (strain DSM 15139 / CIP 105565 / TT01) (Photorhabdus luminescens subsp. laumondii).